A 249-amino-acid polypeptide reads, in one-letter code: Pyridoxine 5'-phosphate synthase (249 aa).

Residue asparagine 10 participates in 3-amino-2-oxopropyl phosphate binding. 12–13 (DH) is a 1-deoxy-D-xylulose 5-phosphate binding site. Arginine 21 is a binding site for 3-amino-2-oxopropyl phosphate. The active-site Proton acceptor is the histidine 46. 2 residues coordinate 1-deoxy-D-xylulose 5-phosphate: arginine 48 and histidine 53. Residue glutamate 73 is the Proton acceptor of the active site. Position 103 (threonine 103) interacts with 1-deoxy-D-xylulose 5-phosphate. The Proton donor role is filled by histidine 194. 3-amino-2-oxopropyl phosphate is bound by residues glycine 195 and 216–217 (GH).

This sequence belongs to the PNP synthase family. In terms of assembly, homooctamer; tetramer of dimers.

The protein localises to the cytoplasm. The catalysed reaction is 3-amino-2-oxopropyl phosphate + 1-deoxy-D-xylulose 5-phosphate = pyridoxine 5'-phosphate + phosphate + 2 H2O + H(+). The protein operates within cofactor biosynthesis; pyridoxine 5'-phosphate biosynthesis; pyridoxine 5'-phosphate from D-erythrose 4-phosphate: step 5/5. Functionally, catalyzes the complicated ring closure reaction between the two acyclic compounds 1-deoxy-D-xylulose-5-phosphate (DXP) and 3-amino-2-oxopropyl phosphate (1-amino-acetone-3-phosphate or AAP) to form pyridoxine 5'-phosphate (PNP) and inorganic phosphate. The protein is Pyridoxine 5'-phosphate synthase of Rhodospirillum rubrum (strain ATCC 11170 / ATH 1.1.1 / DSM 467 / LMG 4362 / NCIMB 8255 / S1).